The primary structure comprises 149 residues: UPF0260 protein PSPTO_3918 (149 aa).

Belongs to the UPF0260 family.

In Pseudomonas syringae pv. tomato (strain ATCC BAA-871 / DC3000), this protein is UPF0260 protein PSPTO_3918.